The chain runs to 676 residues: Envelope glycoprotein (676 aa).

Positions 1 to 32 (MEGLSLLQLPRDKFRKSSFFVWVIILFQKAFS) are cleaved as a signal peptide. At 33 to 650 (MPLGVVTNST…DDNWWTGWRQ (618 aa)) the chain is on the extracellular side. Residue asparagine 40 is glycosylated (N-linked (GlcNAc...) asparagine; by host). Intrachain disulfides connect cysteine 53–cysteine 609, cysteine 108–cysteine 135, cysteine 121–cysteine 147, cysteine 511–cysteine 556, and cysteine 601–cysteine 608. The segment at 54-201 (KDHLASTDQL…TFLQSPPIRE (148 aa)) is receptor-binding. Asparagine 204, asparagine 208, asparagine 238, asparagine 257, asparagine 268, asparagine 296, and asparagine 314 each carry an N-linked (GlcNAc...) asparagine; by host glycan. Positions 305-485 (ELSFETLSLN…STSNGLITST (181 aa)) are mucin-like region. A disordered region spans residues 312-351 (SLNETEDDDATSSRTTKGRISDRATRKYSDLVPKDSPGMV). Residues 330–344 (RISDRATRKYSDLVP) show a composition bias toward basic and acidic residues. Asparagine 366 is a glycosylation site (N-linked (GlcNAc...) asparagine; by host). Residues 406–458 (SSSQILSSSPTMAPSPETQTSTTYTPKLPVMTTEEPTTPPRNSPGSTTEAPTL) form a disordered region. 2 stretches are compositionally biased toward polar residues: residues 415 to 430 (PTMAPSPETQTSTTYT) and 448 to 458 (SPGSTTEAPTL). Residue asparagine 463 is glycosylated (N-linked (GlcNAc...) asparagine; by host). The interval 524 to 539 (HNAAGIAWIPYFGPGA) is fusion peptide. Positions 554-595 (LVCGLRQLANETTQALQLFLRATTELRTYTILNRKAIDFLLR) form a coiled coil. A glycan (N-linked (GlcNAc...) asparagine; by host) is linked at asparagine 563. Positions 615–634 (WTKNITDKINQIIHDFIDNP) form a coiled coil. N-linked (GlcNAc...) asparagine; by host glycosylation is present at asparagine 618. The helical transmembrane segment at 651–671 (WIPAGIGITGIIIAIIALLCV) threads the bilayer. Residues cysteine 670 and cysteine 672 are each lipidated (S-palmitoyl cysteine; by host). Over 672–676 (CKLLC) the chain is Cytoplasmic.

Belongs to the filoviruses glycoprotein family. Homotrimer; each monomer consists of a GP1 and a GP2 subunit linked by disulfide bonds. The resulting peplomers (GP1,2) protrude from the virus surface as spikes. Interacts with host integrin alpha-V/ITGAV. Interacts with host CLEC10A. Binds also to host CD209 and CLEC4M/DC-SIGN(R). Interacts with host FOLR1. Interacts with BST2; this interaction inhibits the antiviral effect of BST2 and this allows viral release from infected cells. Interacts with host FCN1; this interaction enhances viral entry. Interacts with host TLR4; this interaction induces cell death in T-lymphocytes or proinflammatory cytokines and SOCS1 production in monocytes. In terms of assembly, interacts with host entry receptor NPC1. As to quaternary structure, GP1 and GP2delta are part of GP1,2delta soluble complexes released by ectodomain shedding. The signal peptide region modulates GP's high mannose glycosylation, thereby determining the efficiency of the interactions with DC-SIGN(R). In terms of processing, N-glycosylated. Post-translationally, O-glycosylated in the mucin-like region. Palmitoylation of GP2 is not required for its function. In terms of processing, specific enzymatic cleavages in vivo yield mature proteins. The precursor is processed into GP1 and GP2 by host cell furin in the trans Golgi, and maybe by other host proteases, to yield the mature GP1 and GP2 proteins. The cleavage site corresponds to the furin optimal cleavage sequence [KR]-X-[KR]-R. This cleavage does not seem to be required for function. After the internalization of the virus into cell endosomes, GP1 C-terminus is removed by the endosomal proteases cathepsin B, cathepsin L, or both, leaving a 19-kDa N-terminal fragment which is further digested by cathepsin B. Proteolytic processing of GP1,2 by host ADAM17 can remove the transmembrane anchor of GP2 and leads to shedding of complexes consisting in GP1 and truncated GP2 (GP1,2delta).

The protein localises to the virion membrane. It is found in the host cell membrane. Its subcellular location is the secreted. Its function is as follows. Trimeric GP1,2 complexes form the virion surface spikes and mediate the viral entry processes, with GP1 acting as the receptor-binding subunit and GP2 as the membrane fusion subunit. At later times of infection, down-regulates the expression of various host cell surface molecules that are essential for immune surveillance and cell adhesion. Down-modulates several integrins including ITGA1, ITGA2, ITGA3, ITGA4, ITGA5, ITGA6, ITGAV and ITGB1. This decrease in cell adhesion molecules may lead to cell detachment, contributing to the disruption of blood vessel integrity and hemorrhages developed during infection (cytotoxicity). Interacts with host TLR4 and thereby stimulates the differentiation and activation of monocytes leading to bystander death of T-lymphocytes. Down-regulates as well the function of host natural killer cells. Counteracts the antiviral effect of host BST2/tetherin that restricts release of progeny virions from infected cells. However, cooperates with VP40 and host BST2 to activate canonical NF-kappa-B pathway in a manner dependent on neddylation. In terms of biological role, functions as a decoy for anti-GP1,2 antibodies thereby contributing to viral immune evasion. Interacts and activates host macrophages and dendritic cells inducing up-regulation of cytokine transcription. This effect is mediated throught activation of host TLR4. Responsible for binding to the receptor(s) on target cells. Interacts with CD209/DC-SIGN and CLEC4M/DC-SIGNR which act as cofactors for virus entry into dendritic cells (DCs) and endothelial cells. Binding to the macrophage specific lectin CLEC10A also seems to enhance virus infectivity. Interaction with FOLR1/folate receptor alpha may be a cofactor for virus entry in some cell types, although results are contradictory. Members of the Tyro3 receptor tyrosine kinase family also seem to be cell entry factors in filovirus infection. Once attached, the virions are internalized through clathrin-dependent endocytosis and/or macropinocytosis. After internalization of the virus into the endosomes of the host cell, proteolysis of GP1 by two cysteine proteases, CTSB/cathepsin B and CTSL/cathepsin L removes the glycan cap and allows GP1 binding to the host entry receptor NPC1. NPC1-binding, Ca(2+) and acidic pH induce a conformational change of GP2, which unmasks its fusion peptide and permit membranes fusion. Functionally, acts as a class I viral fusion protein. Under the current model, the protein has at least 3 conformational states: pre-fusion native state, pre-hairpin intermediate state, and post-fusion hairpin state. During viral and target cell membrane fusion, the coiled coil regions (heptad repeats) assume a trimer-of-hairpins structure, positioning the fusion peptide in close proximity to the C-terminal region of the ectodomain. The formation of this structure appears to drive apposition and subsequent fusion of viral and target cell membranes. Responsible for penetration of the virus into the cell cytoplasm by mediating the fusion of the membrane of the endocytosed virus particle with the endosomal membrane. Low pH in endosomes induces an irreversible conformational change in GP2, releasing the fusion hydrophobic peptide. This chain is Envelope glycoprotein (GP), found in Sudan ebolavirus (strain Maleo-79) (SEBOV).